The sequence spans 159 residues: Ribosomal RNA large subunit methyltransferase H (159 aa).

Residues L76, G108, and 127–132 (FSKMTF) each bind S-adenosyl-L-methionine.

The protein belongs to the RNA methyltransferase RlmH family. Homodimer.

It is found in the cytoplasm. It catalyses the reaction pseudouridine(1915) in 23S rRNA + S-adenosyl-L-methionine = N(3)-methylpseudouridine(1915) in 23S rRNA + S-adenosyl-L-homocysteine + H(+). Functionally, specifically methylates the pseudouridine at position 1915 (m3Psi1915) in 23S rRNA. This is Ribosomal RNA large subunit methyltransferase H from Clostridium botulinum (strain ATCC 19397 / Type A).